The primary structure comprises 131 residues: MSMSDPIADMLTRIRNAQQVDKTTVTMPASKLKVAIATVLKDEGYIDGYSVKGTQAKPELEITLKYYAGRPVIERIERVSRPGLRIYKGRTSIPQVMNGLGVAIVSTSRGVMTDRKARANGVGGEVLCYVA.

It belongs to the universal ribosomal protein uS8 family. Part of the 30S ribosomal subunit. Contacts proteins S5 and S12.

One of the primary rRNA binding proteins, it binds directly to 16S rRNA central domain where it helps coordinate assembly of the platform of the 30S subunit. The protein is Small ribosomal subunit protein uS8 of Bordetella parapertussis (strain 12822 / ATCC BAA-587 / NCTC 13253).